The primary structure comprises 201 residues: Aminoglycoside N(6')-acetyltransferase type 1 (201 aa).

The N-acetyltransferase domain maps to valine 25–glutamine 192. The substrate site is built by tryptophan 51 and aspartate 154. Asparagine 159 is an acetyl-CoA binding site.

As to quaternary structure, homodimer.

It catalyses the reaction kanamycin B + acetyl-CoA = N(6')-acetylkanamycin B + CoA + H(+). In terms of biological role, catalyzes the transfer of an acetyl group from acetyl-CoA to the 6'-amino group of aminoglycoside molecules conferring resistance to antibiotics containing the purpurosamine ring including amikacin. This Klebsiella pneumoniae protein is Aminoglycoside N(6')-acetyltransferase type 1 (aacA4).